The following is a 445-amino-acid chain: ATP synthase subunit b-delta (445 aa).

The segment at 1-168 is ATP synthase subunit b; sequence MSIFIGQLIG…PSSVVIDTAA (168 aa). The chain crosses the membrane as a helical span at residues 3–23; that stretch reads IFIGQLIGFAVIAFIIVKWVV. Residues 169 to 445 form an ATP synthase subunit delta region; that stretch reads TSRLRAASRQ…LAAAQTGLPD (277 aa).

The protein in the N-terminal section; belongs to the ATPase B chain family. In the C-terminal section; belongs to the ATPase delta chain family. In terms of assembly, F-type ATPases have 2 components, F(1) - the catalytic core - and F(0) - the membrane proton channel. F(1) has five subunits: alpha(3), beta(3), gamma(1), delta(1), epsilon(1). F(0) has three main subunits: a(1), b(2) and c(10-14). The alpha and beta chains form an alternating ring which encloses part of the gamma chain. F(1) is attached to F(0) by a central stalk formed by the gamma and epsilon chains, while a peripheral stalk is formed by the delta and b chains.

Its subcellular location is the cell membrane. Functionally, f(1)F(0) ATP synthase produces ATP from ADP in the presence of a proton or sodium gradient. F-type ATPases consist of two structural domains, F(1) containing the extramembraneous catalytic core and F(0) containing the membrane proton channel, linked together by a central stalk and a peripheral stalk. During catalysis, ATP synthesis in the catalytic domain of F(1) is coupled via a rotary mechanism of the central stalk subunits to proton translocation. Its function is as follows. This fusion protein includes a component of the F(0) channel (subunit b) and of the F(1) subunit (subunit delta). Two copies of subunit b and one of delta together form the peripheral 'stator' stalk which links F(1) to F(0). This is ATP synthase subunit b-delta (atpFH) from Mycolicibacterium smegmatis (strain ATCC 700084 / mc(2)155) (Mycobacterium smegmatis).